A 623-amino-acid chain; its full sequence is Immunity-related GTPase family Q protein (623 aa).

An intrachain disulfide couples cysteine 152 to cysteine 158. The stretch at 155-180 (SDGCEELERLRAALQSQAEALRRLLP) forms a coiled coil. An LIR 1 motif is present at residues 186–189 (FEVL). At threonine 203 the chain carries Phosphothreonine. The IRG-type G domain occupies 223–449 (ARLDLAVAGK…PGLCEWLRRA (227 aa)). The interval 334 to 393 (EGEDPECLGEGKMENPKGESLKNAGGGGLENALSKGREKCSAGSQKAGSGEGPGKAGSEG) is disordered. The segment covering 342–353 (GEGKMENPKGES) has biased composition (basic and acidic residues). An LIR 2 motif is present at residues 421–424 (WEVL).

Belongs to the TRAFAC class dynamin-like GTPase superfamily. IRG family. In terms of assembly, interacts (via LIR motif 1) with GABARAPL2. Interacts (via LIR motif 2) with MAP1LC3B/LC3B.

The protein localises to the lysosome. Its subcellular location is the cytoplasmic vesicle. It is found in the autophagosome. Its function is as follows. Autophagy receptor that specifically promotes clearance of misfolded MHC class I molecules by targeting them to the lysosome for degradation. Acts as a molecular adapter that specifically recognizes and binds (1) misfolded MHC class I molecules following their ubiquitination, as well as (2) autophagy-related proteins, promoting the recruitment of misfolded MHC class I molecules to autophagy machinery for degradation. Degradation of misfolded MHC class I molecules is essential to prevent accumulation of defective MHC class I complexes at the surface of CD8(+) T-cells and prevent a stronger T-cell-mediated response. In contrast to other members of the family, does not show GTPase activity. This is Immunity-related GTPase family Q protein from Homo sapiens (Human).